A 186-amino-acid polypeptide reads, in one-letter code: UPF0340 protein M6_Spy1622 (186 aa).

It belongs to the UPF0340 family.

The polypeptide is UPF0340 protein M6_Spy1622 (Streptococcus pyogenes serotype M6 (strain ATCC BAA-946 / MGAS10394)).